Here is a 693-residue protein sequence, read N- to C-terminus: Exocyst complex component 7 (693 aa).

Serine 236 carries the post-translational modification Phosphoserine. Residues 236–259 (SWGHEALRPRHSGRQTEPKKTTSA) are disordered.

This sequence belongs to the EXO70 family. In terms of assembly, the exocyst complex is composed of Sec3/Exoc1, Sec5/Exoc2, Sec6/Exoc3, Sec8/Exoc4, Sec10/Exoc5, Sec15/Exoc6, Exo70/Exoc7 and Exo84/Exoc8.

Functionally, required for exocytosis. Thought to function in intracellular vesicle targeting and docking before SNARE complex formation. This is Exocyst complex component 7 from Drosophila melanogaster (Fruit fly).